Consider the following 234-residue polypeptide: Peptidyl-prolyl cis-trans isomerase FKBP17-3, chloroplastic (234 aa).

A chloroplast-targeting transit peptide spans 1–28 (MATLFTATVPSHHRFVSPSQHPKQSLLS). The region spanning 130–228 (GYLVVFDVKG…DYIIEVDTVY (99 aa)) is the PPIase FKBP-type domain.

Belongs to the FKBP-type PPIase family.

The protein resides in the plastid. Its subcellular location is the chloroplast thylakoid lumen. It catalyses the reaction [protein]-peptidylproline (omega=180) = [protein]-peptidylproline (omega=0). Its function is as follows. PPIases accelerate the folding of proteins. It catalyzes the cis-trans isomerization of proline imidic peptide bonds in oligopeptides. The chain is Peptidyl-prolyl cis-trans isomerase FKBP17-3, chloroplastic (FKBP17-3) from Arabidopsis thaliana (Mouse-ear cress).